A 365-amino-acid chain; its full sequence is Glucose 1-dehydrogenase 1 (365 aa).

Aspartate 38 contributes to the Zn(2+) binding site. Threonine 40 contacts substrate. The Zn(2+) site is built by histidine 63 and glutamate 64. The substrate site is built by glutamate 115 and glutamate 151. Glutamate 151 serves as a coordination point for Zn(2+). Residues asparagine 182–leucine 185, arginine 207–arginine 208, leucine 272–valine 274, and serine 301–asparagine 303 contribute to the NADP(+) site. Asparagine 303 is a binding site for substrate.

The protein belongs to the zinc-containing alcohol dehydrogenase family. Glucose 1-dehydrogenase subfamily. The cofactor is Zn(2+).

The enzyme catalyses D-glucose + NAD(+) = D-glucono-1,5-lactone + NADH + H(+). The catalysed reaction is D-glucose + NADP(+) = D-glucono-1,5-lactone + NADPH + H(+). Its function is as follows. Catalyzes the NAD(P)(+)-dependent oxidation of D-glucose to D-gluconate via gluconolactone. Can utilize both NAD(+) and NADP(+) as electron acceptor. Is involved in the degradation of glucose through a modified Entner-Doudoroff pathway. The polypeptide is Glucose 1-dehydrogenase 1 (Haloterrigena turkmenica (strain ATCC 51198 / DSM 5511 / JCM 9101 / NCIMB 13204 / VKM B-1734 / 4k) (Halococcus turkmenicus)).